The primary structure comprises 942 residues: Protein NLP1 (942 aa).

Positions 1-11 are enriched in pro residues; that stretch reads MEQKPSPPPPP. 5 disordered regions span residues 1 to 32, 77 to 106, 594 to 620, 723 to 753, and 759 to 778; these read MEQKPSPPPPPRSDEEEDGLMGCGMGGTGDIA, TTPAPAAGEDDRDEAEMPSRGGGGLEVSPA, VKENTCSSDPSNSNSDKAVEKRRTKTE, FQLEPSVPDRPCEGRFTSHTSGSNSISPSCS, and SLGCSSVPKTQQQHGSAPQL. Over residues 21–32 the composition is skewed to gly residues; sequence MGCGMGGTGDIA. A compositionally biased stretch (polar residues) spans 597-609; the sequence is NTCSSDPSNSNSD. Positions 609 to 690 constitute an RWP-RK domain; the sequence is DKAVEKRRTK…IDSVHGPEGT (82 aa). The segment covering 743–753 has biased composition (low complexity); that stretch reads SGSNSISPSCS. The segment covering 765 to 774 has biased composition (polar residues); sequence VPKTQQQHGS. The 84-residue stretch at 844–927 folds into the PB1 domain; the sequence is SLKIKAIYGE…QTVRILVNPS (84 aa).

It is found in the nucleus. Its function is as follows. Probable transcription factor. The sequence is that of Protein NLP1 (NLP1) from Oryza sativa subsp. japonica (Rice).